We begin with the raw amino-acid sequence, 406 residues long: D-alanyl-D-alanine carboxypeptidase (406 aa).

A signal peptide spans 1–31; sequence MVSGTVGRGTALGAVLLALLAVPAQAGTAAA. S93 serves as the catalytic Acyl-ester intermediate. Residues 151 to 154, 190 to 192, R316, 330 to 332, and 357 to 358 each bind substrate; these read FAQT, YSN, TGT, and SN. Positions 381-406 are excised as a propeptide; it reads AKLRSATSSATTVERHEDIAPGIARD. The segment at 387–406 is disordered; sequence TSSATTVERHEDIAPGIARD. Positions 393-406 are enriched in basic and acidic residues; it reads VERHEDIAPGIARD.

This sequence belongs to the peptidase S12 family.

It localises to the secreted. The enzyme catalyses Preferential cleavage: (Ac)2-L-Lys-D-Ala-|-D-Ala. Also transpeptidation of peptidyl-alanyl moieties that are N-acyl substituents of D-alanine.. Its pathway is cell wall biogenesis; peptidoglycan biosynthesis. Catalyzes distinct carboxypeptidation and transpeptidation reactions during the last stages of wall peptidoglycan synthesis. Mistaking a beta-lactam antibiotic molecule for a normal substrate (i.e. a D-alanyl-D-alanine-terminated peptide), it becomes immobilized in the form of a long-lived, serine-ester-linked acyl enzyme and thus behave as penicillin-binding protein (PBP). This chain is D-alanyl-D-alanine carboxypeptidase, found in Streptomyces sp. (strain R61).